We begin with the raw amino-acid sequence, 124 residues long: Ribonuclease pancreatic (124 aa).

Residues 1 to 13 (KESAAAKFERQHM) show a composition bias toward basic and acidic residues. A disordered region spans residues 1 to 24 (KESAAAKFERQHMDSSTSSASSSN). 2 residues coordinate substrate: Lys7 and Arg10. His12 functions as the Proton acceptor in the catalytic mechanism. 4 disulfide bridges follow: Cys26/Cys84, Cys40/Cys95, Cys58/Cys110, and Cys65/Cys72. The N-linked (GlcNAc...) asparagine; partial glycan is linked to Asn34. Substrate is bound by residues 41–45 (KPVNT), Lys66, and Arg85. His119 functions as the Proton donor in the catalytic mechanism.

The protein belongs to the pancreatic ribonuclease family. In terms of assembly, monomer. Interacts with and forms tight 1:1 complexes with RNH1. Dimerization of two such complexes may occur. Interaction with RNH1 inhibits this protein. Pancreas.

Its subcellular location is the secreted. The catalysed reaction is an [RNA] containing cytidine + H2O = an [RNA]-3'-cytidine-3'-phosphate + a 5'-hydroxy-ribonucleotide-3'-[RNA].. The enzyme catalyses an [RNA] containing uridine + H2O = an [RNA]-3'-uridine-3'-phosphate + a 5'-hydroxy-ribonucleotide-3'-[RNA].. Endonuclease that catalyzes the cleavage of RNA on the 3' side of pyrimidine nucleotides. Acts on single-stranded and double-stranded RNA. The polypeptide is Ribonuclease pancreatic (RNASE1) (Aepyceros melampus (Impala)).